The following is a 342-amino-acid chain: Phomopsin biosynthesis cluster protein B' (342 aa).

A disordered region spans residues 1-22 (MESIAKAKSLPNKGRTYDSQRP). The helical transmembrane segment at 87–107 (VLIIGCAVISLFAIIGALGFA) threads the bilayer. Residues 118-186 (CASPAHQNPH…QCGESPDEAQ (69 aa)) form a disordered region. Residues 144 to 155 (HSGSHSSSSSTN) show a composition bias toward low complexity. A glycan (N-linked (GlcNAc...) asparagine) is linked at asparagine 248.

The protein localises to the membrane. Its function is as follows. Part of the gene cluster that mediates the biosynthesis of the phomopsins, a group of hexapeptide mycotoxins which infects lupins and causes lupinosis disease in livestock. The role of phomB' within the phomopsins biosynthesis pathway has still to be determined. The pathway starts with the processing of the precursor phomA by several endopeptidases including kexin proteases as well as the cluster-specific S41 family peptidase phomP1 and the oligopeptidase phomG to produce 10 identical copies of the hexapeptide Tyr-Val-Ile-Pro-Ile-Asp. After being excised from the precursor peptide, the core peptides are cyclized and modified post-translationally by enzymes encoded within the gene cluster. The timing and order of proteolysis of the phomA precursor and PTMs are still unknown. Two tyrosinase-like enzymes, phomQ1 and phomQ2, catalyze the chlorination and hydroxylation of Tyr, respectively. PhomYb, is proposed to be involved in the construction of the macrocyclic structure. The other 4 ustYa family proteins may be involved in PTMs that generate the unique structure of phomopsin A. PhomYa is required for the hydroxylation of C-beta of Tyr. PhomYc, phomYd, and phomYe are responsible for the biosynthesis of 2,3-dehydroisoleucine (dIle), 2,3-dehydroaspartic acid (dAsp), and 3,4-dehydroproline (dPro), respectively. While dIle formation by phomYc is indispensable for the installation of dAsp by phomYd, the order of the other PTMs have not been elucidated yet. Most of the biosynthetic enzymes likely have broad substrate specificity, and thus, there might be a metabolic grid from a precursor to phomopsin A. The enzyme(s) responsible for the biosynthesis of 3,4-dehydrovaline (dVal) have also not been identified yet. Finally, phomM acts as an S-adenosylmethionine-dependent alpha-N-methyltransferase that catalyzes two successive N-methylation reactions, converting N-desmethyl-phomopsin A to phomopsin A and phomopsin A further to an N,N-dimethylated congener called phomopsin E. This is Phomopsin biosynthesis cluster protein B' from Diaporthe leptostromiformis (Lupinosis disease fungus).